The following is a 172-amino-acid chain: 3-hydroxydecanoyl-[acyl-carrier-protein] dehydratase (172 aa).

Histidine 71 is a catalytic residue.

The protein belongs to the thioester dehydratase family. FabA subfamily. As to quaternary structure, homodimer.

The protein localises to the cytoplasm. It catalyses the reaction a (3R)-hydroxyacyl-[ACP] = a (2E)-enoyl-[ACP] + H2O. The catalysed reaction is (3R)-hydroxydecanoyl-[ACP] = (2E)-decenoyl-[ACP] + H2O. The enzyme catalyses (2E)-decenoyl-[ACP] = (3Z)-decenoyl-[ACP]. Its pathway is lipid metabolism; fatty acid biosynthesis. Necessary for the introduction of cis unsaturation into fatty acids. Catalyzes the dehydration of (3R)-3-hydroxydecanoyl-ACP to E-(2)-decenoyl-ACP and then its isomerization to Z-(3)-decenoyl-ACP. Can catalyze the dehydratase reaction for beta-hydroxyacyl-ACPs with saturated chain lengths up to 16:0, being most active on intermediate chain length. This chain is 3-hydroxydecanoyl-[acyl-carrier-protein] dehydratase, found in Blochmanniella floridana.